A 258-amino-acid chain; its full sequence is Imidazole glycerol phosphate synthase subunit HisF (258 aa).

Residues aspartate 12 and aspartate 131 contribute to the active site.

This sequence belongs to the HisA/HisF family. As to quaternary structure, heterodimer of HisH and HisF.

It is found in the cytoplasm. The catalysed reaction is 5-[(5-phospho-1-deoxy-D-ribulos-1-ylimino)methylamino]-1-(5-phospho-beta-D-ribosyl)imidazole-4-carboxamide + L-glutamine = D-erythro-1-(imidazol-4-yl)glycerol 3-phosphate + 5-amino-1-(5-phospho-beta-D-ribosyl)imidazole-4-carboxamide + L-glutamate + H(+). It functions in the pathway amino-acid biosynthesis; L-histidine biosynthesis; L-histidine from 5-phospho-alpha-D-ribose 1-diphosphate: step 5/9. Its function is as follows. IGPS catalyzes the conversion of PRFAR and glutamine to IGP, AICAR and glutamate. The HisF subunit catalyzes the cyclization activity that produces IGP and AICAR from PRFAR using the ammonia provided by the HisH subunit. The protein is Imidazole glycerol phosphate synthase subunit HisF of Nocardioides sp. (strain ATCC BAA-499 / JS614).